Reading from the N-terminus, the 220-residue chain is Response regulator ArlR (220 aa).

The 114-residue stretch at 3–116 folds into the Response regulatory domain; it reads KILIVEDEQN…ELLARIRAML (114 aa). Asp-52 is modified (4-aspartylphosphate). A DNA-binding region (ompR/PhoB-type) is located at residues 122–220; that stretch reads KNLIDIKGII…VRGVGYVVRQ (99 aa).

Post-translationally, phosphorylated by ArlS.

It is found in the cytoplasm. Functionally, member of the two-component regulatory system ArlS/ArlR. The sequence is that of Response regulator ArlR (arlR) from Staphylococcus saprophyticus subsp. saprophyticus (strain ATCC 15305 / DSM 20229 / NCIMB 8711 / NCTC 7292 / S-41).